Reading from the N-terminus, the 379-residue chain is Alcohol dehydrogenase 2 (379 aa).

Zn(2+) contacts are provided by Cys47, Thr49, His69, Cys99, Cys102, Cys105, Cys113, and Cys177. Residues Thr49 and His69 each contribute to the an alcohol site. Thr49 lines the NAD(+) pocket. NAD(+) is bound by residues 202-207 (GLGAVG), Asp226, Lys231, Thr272, Val295, 295-297 (VGV), Phe322, and Arg372.

Belongs to the zinc-containing alcohol dehydrogenase family. As to quaternary structure, homodimer. Zn(2+) serves as cofactor.

Its subcellular location is the cytoplasm. It carries out the reaction a primary alcohol + NAD(+) = an aldehyde + NADH + H(+). The catalysed reaction is a secondary alcohol + NAD(+) = a ketone + NADH + H(+). This chain is Alcohol dehydrogenase 2 (ADH2), found in Zea mays (Maize).